The following is a 252-amino-acid chain: Probable endonuclease 4 (252 aa).

Residues His56, His96, Glu129, Asp162, His165, His191, Asp204, His206, and Glu233 each contribute to the Zn(2+) site.

It belongs to the AP endonuclease 2 family. The cofactor is Zn(2+).

It carries out the reaction Endonucleolytic cleavage to 5'-phosphooligonucleotide end-products.. In terms of biological role, endonuclease IV plays a role in DNA repair. It cleaves phosphodiester bonds at apurinic or apyrimidinic (AP) sites, generating a 3'-hydroxyl group and a 5'-terminal sugar phosphate. The chain is Probable endonuclease 4 from Mycobacterium leprae (strain Br4923).